The sequence spans 165 residues: Sec-independent protein translocase protein TatB (165 aa).

A helical transmembrane segment spans residues Met-1–Gly-21. Over residues Asp-67–Leu-84 the composition is skewed to polar residues. The interval Asp-67–Thr-165 is disordered. Low complexity predominate over residues Lys-127–Pro-159.

This sequence belongs to the TatB family. The Tat system comprises two distinct complexes: a TatABC complex, containing multiple copies of TatA, TatB and TatC subunits, and a separate TatA complex, containing only TatA subunits. Substrates initially bind to the TatABC complex, which probably triggers association of the separate TatA complex to form the active translocon.

It is found in the cell inner membrane. Its function is as follows. Part of the twin-arginine translocation (Tat) system that transports large folded proteins containing a characteristic twin-arginine motif in their signal peptide across membranes. Together with TatC, TatB is part of a receptor directly interacting with Tat signal peptides. TatB may form an oligomeric binding site that transiently accommodates folded Tat precursor proteins before their translocation. In Bordetella avium (strain 197N), this protein is Sec-independent protein translocase protein TatB.